The sequence spans 354 residues: mRNA cap guanine-N(7) methyltransferase 2 (354 aa).

The region spanning 8–286 (KPEQSHHRLF…LYATFIFQKP (279 aa)) is the mRNA cap 0 methyltransferase domain. S-adenosyl-L-methionine contacts are provided by residues Lys21, Asp61, and 88 to 89 (DP).

The protein belongs to the class I-like SAM-binding methyltransferase superfamily. mRNA cap 0 methyltransferase family.

The protein resides in the nucleus. The catalysed reaction is a 5'-end (5'-triphosphoguanosine)-ribonucleoside in mRNA + S-adenosyl-L-methionine = a 5'-end (N(7)-methyl 5'-triphosphoguanosine)-ribonucleoside in mRNA + S-adenosyl-L-homocysteine. Its function is as follows. mRNA capping methyltransferase that methylates the N7 position of the added guanosine to the 5'-cap structure of mRNAs. Binds RNA containing 5'-terminal GpppC. The sequence is that of mRNA cap guanine-N(7) methyltransferase 2 from Arabidopsis thaliana (Mouse-ear cress).